Here is a 395-residue protein sequence, read N- to C-terminus: Isoafricanol synthase (395 aa).

Mg(2+) contacts are provided by D95, N246, S250, and E254. Over residues T346–W357 the composition is skewed to basic and acidic residues. The disordered stretch occupies residues T346–A395.

The protein belongs to the terpene synthase family. The cofactor is Mg(2+).

The enzyme catalyses (2E,6E)-farnesyl diphosphate + H2O = (+)-isoafricanol + diphosphate. Functionally, catalyzes the cyclization of farnesyl diphosphate (FPP) to isoafricanol. In Streptomyces malaysiensis, this protein is Isoafricanol synthase.